The following is a 936-amino-acid chain: MRPRSGGRPGATGRRRRRLRRRPRGLRCSRLPPPPPLPLLLGLLLAAAGPGAARAKETAFVEVVLFESSPSGDYTTYTTGLTGRFSRAGATLSAEGEIVQMHPLGLCNNNDEEDLYEYGWVGVVKLEQPELDPKPCLTVLGKAKRAVQRGATAVIFDVSENPEAIDQLNQGSEDPLKRPVVYVKGADAIKLMNIVNKQKVARARIQHRPPRQPTEYFDMGIFLAFFVVVSLVCLILLVKIKLKQRRSQNSMNRLAVQALEKMETRKFNSKSKGRREGSCGALDTLSSSSTSDCAICLEKYIDGEELRVIPCTHRFHRKCVDPWLLQHHTCPHCRHNIIEQKGNPSAVCVETSNLSRGRQQRVTLPVHYPGRVHRTNAIPAYPTRTSMDSHGNPVTLLTMDRHGEQSLYSPQTPAYIRSYPPLHLDHSLAAHRCGLEHRAYSPAHPFRRPKLSGRSFSKAACFSQYETMYQHYYFQGLSYPEQEGQSPPSLAPRGPARAFPPSGSGSLLFPTVVHVAPPSHLESGSTSSFSCYHGHRSVCSGYLADCPGSDSSSSSSSGQCHCSSSDSVVDCTEVSNQGVYGSCSTFRSSLSSDYDPFIYRSRSPCRASEAGGSGSSGRGPALCFEGSPPPEELPAVHSHGAGRGEPWPGPASPSGDQVSTCSLEMNYSSNSSLEHRGPNSSTSEVGLEASPGAAPDLRRTWKGGHELPSCACCCEPQPSPAGPSAGAAGSSTLFLGPHLYEGSGPAGGEPQSGSSQGLYGLHPDHLPRTDGVKYEGLPCCFYEEKQVARGGGGGSGCYTEDYSVSVQYTLTEEPPPGCYPGARDLSQRIPIIPEDVDCDLGLPSDCQGTHSLGSWGGTRGPDTPRPHRGLGATREEERALCCQARALLRPGCPPEEAGAVRANFPSALQDTQESSTTATEAAGPRSHSADSSSPGA.

The disordered stretch occupies residues 1–31 (MRPRSGGRPGATGRRRRRLRRRPRGLRCSRL). Positions 1–55 (MRPRSGGRPGATGRRRRRLRRRPRGLRCSRLPPPPPLPLLLGLLLAAAGPGAARA) are cleaved as a signal peptide. Basic residues predominate over residues 13 to 27 (GRRRRRLRRRPRGLR). Over 56-219 (KETAFVEVVL…PRQPTEYFDM (164 aa)) the chain is Extracellular. Residues 220 to 240 (GIFLAFFVVVSLVCLILLVKI) traverse the membrane as a helical segment. Residues 241 to 936 (KLKQRRSQNS…HSADSSSPGA (696 aa)) are Cytoplasmic-facing. The RING-type; atypical zinc finger occupies 293-334 (CAICLEKYIDGEELRVIPCTHRFHRKCVDPWLLQHHTCPHCR). 4 disordered regions span residues 608–693 (SEAG…SPGA), 739–758 (LYEG…SQGL), 849–875 (THSL…ATRE), and 892–936 (CPPE…SPGA). Residues 654–684 (SGDQVSTCSLEMNYSSNSSLEHRGPNSSTSE) are compositionally biased toward polar residues. Residues 913-922 (ESSTTATEAA) show a composition bias toward low complexity.

Belongs to the ZNRF3 family. As to quaternary structure, interacts with LRP6, FZD4, FZD5, FZD6 and FZD8. Interacts with RSPO1; interaction promotes indirect interaction with LGR4 and membrane clearance of ZNRF3. Also interacts with RSPO2. Interacts with LMBR1L.

It localises to the cell membrane. The enzyme catalyses S-ubiquitinyl-[E2 ubiquitin-conjugating enzyme]-L-cysteine + [acceptor protein]-L-lysine = [E2 ubiquitin-conjugating enzyme]-L-cysteine + N(6)-ubiquitinyl-[acceptor protein]-L-lysine.. It participates in protein modification; protein ubiquitination. With respect to regulation, negatively regulated by R-spondin proteins such as RSPO1: interaction with RSPO1 induces the indirect association between ZNRF3 and LGR4, promoting membrane clearance of ZNRF3. E3 ubiquitin-protein ligase that acts as a negative regulator of the Wnt signaling pathway by mediating the ubiquitination and subsequent degradation of Wnt receptor complex components Frizzled and LRP6. Acts on both canonical and non-canonical Wnt signaling pathway. Acts as a tumor suppressor in the intestinal stem cell zone by inhibiting the Wnt signaling pathway, thereby restricting the size of the intestinal stem cell zone. Along with RSPO2 and RNF43, constitutes a master switch that governs limb specification. This Homo sapiens (Human) protein is E3 ubiquitin-protein ligase ZNRF3 (ZNRF3).